Reading from the N-terminus, the 397-residue chain is Geranylgeranyl pyrophosphate synthase AN1592 (397 aa).

A disordered region spans residues 1–67 (MSPPLDSALE…SHDSSASSNI (67 aa)). Over residues 13 to 42 (SEYKETAFPRTEKDPSQYKEHDLVTPEKEI) the composition is skewed to basic and acidic residues. Positions 52–67 (SHSSHGSHDSSASSNI) are enriched in low complexity. Isopentenyl diphosphate is bound by residues Lys-120, Arg-123, and His-152. Mg(2+)-binding residues include Asp-159 and Asp-163. A dimethylallyl diphosphate-binding site is contributed by Arg-168. Arg-169 is a binding site for isopentenyl diphosphate. Positions 247, 248, and 281 each coordinate dimethylallyl diphosphate. Asp-284 lines the Mg(2+) pocket. Dimethylallyl diphosphate is bound by residues Asn-288, Lys-298, and Lys-308.

Belongs to the FPP/GGPP synthase family. Mg(2+) serves as cofactor.

The catalysed reaction is isopentenyl diphosphate + dimethylallyl diphosphate = (2E)-geranyl diphosphate + diphosphate. It catalyses the reaction isopentenyl diphosphate + (2E)-geranyl diphosphate = (2E,6E)-farnesyl diphosphate + diphosphate. The enzyme catalyses isopentenyl diphosphate + (2E,6E)-farnesyl diphosphate = (2E,6E,10E)-geranylgeranyl diphosphate + diphosphate. It functions in the pathway secondary metabolite biosynthesis; terpenoid biosynthesis. In terms of biological role, geranylgeranyl pyrophosphate synthase; part of the gene cluster that mediates the biosynthesis of the diterpene ent-pimara-8(14),15-diene (PD). Within the cluster, the HMG-CoA reductase AN1593 functions in the mevalonate pathway, which produces isoprenoid precursors. The geranylgeranyl pyrophosphate (GGPP) synthase AN1592 is needed in the formation of GGPP, the precursor for diterpenes. Lastly, the pimaradiene synthase pbcA performs the 2 cyclization steps that convert GGPP to ent-pimara-8(14),15-diene. The putative roles of the remaining cluster enzymes in ent-pimara-8(14),15-diene biosynthesis is unclear. The cytochrome P450 monooxygenase AN1598, the glutathione S-transferase AN1595, the oxidoreductases AN1596 and AN1597 probably function as decorative enzymes. It is possible that in biological conditions the compound is oxidized to ent-pimara-8(14),15-dien-19-oic acid, which is a bioactive diterpene compound predominant in many plant extracts. The sequence is that of Geranylgeranyl pyrophosphate synthase AN1592 from Emericella nidulans (strain FGSC A4 / ATCC 38163 / CBS 112.46 / NRRL 194 / M139) (Aspergillus nidulans).